The chain runs to 136 residues: uncharacterized protein (136 aa).

2 consecutive transmembrane segments (helical) span residues 36–56 (FLLTNLVFLFVAFLILIIYLI) and 63–83 (FAFAFIATIVFIIFYNILFLS).

Its subcellular location is the cell membrane. This is an uncharacterized protein from Mycoplasma pneumoniae (strain ATCC 29342 / M129 / Subtype 1) (Mycoplasmoides pneumoniae).